The following is a 48-amino-acid chain: Small, acid-soluble spore protein N (48 aa).

Residues 1–48 (MGINKKDGQPQYAPSHLGTKPVKYKRNKGEKFHDKSNGHPIVMQTKGE) are disordered. Basic and acidic residues predominate over residues 27–37 (NKGEKFHDKSN).

It belongs to the SspN family.

Its subcellular location is the spore core. In Bacillus velezensis (strain DSM 23117 / BGSC 10A6 / LMG 26770 / FZB42) (Bacillus amyloliquefaciens subsp. plantarum), this protein is Small, acid-soluble spore protein N.